The sequence spans 278 residues: D-arabinitol 2-dehydrogenase [ribulose-forming] (278 aa).

Residues Leu28 and Asn49 each contribute to the NADP(+) site. Ser166 (proton donor) is an active-site residue. NADP(+) is bound by residues Tyr181, Lys185, Ile214, and Thr216. Tyr181 acts as the Proton acceptor in catalysis. Lys185 functions as the Lowers pKa of active site Tyr in the catalytic mechanism.

The protein belongs to the short-chain dehydrogenases/reductases (SDR) family.

It carries out the reaction D-arabinitol + NAD(+) = D-ribulose + NADH + H(+). It functions in the pathway carbohydrate metabolism; D-arabinitol metabolism. The protein is D-arabinitol 2-dehydrogenase [ribulose-forming] (ARDH) of Scheffersomyces stipitis (strain ATCC 58785 / CBS 6054 / NBRC 10063 / NRRL Y-11545) (Yeast).